The sequence spans 117 residues: MDKKSARIRRATRARRKLKELGATRLVVHRSPRHMYAQVIAPNGSEVLVAASTLEKAITEQLKYSGNKDAAAAVGKALAERALEKGIAKVSFARSGFQYHGRVQALADAAREAGLQF.

This sequence belongs to the universal ribosomal protein uL18 family. Part of the 50S ribosomal subunit; part of the 5S rRNA/L5/L18/L25 subcomplex. Contacts the 5S and 23S rRNAs.

In terms of biological role, this is one of the proteins that bind and probably mediate the attachment of the 5S RNA into the large ribosomal subunit, where it forms part of the central protuberance. This chain is Large ribosomal subunit protein uL18, found in Buchnera aphidicola subsp. Acyrthosiphon kondoi (Acyrthosiphon kondoi symbiotic bacterium).